Reading from the N-terminus, the 497-residue chain is Glycerol kinase (497 aa).

Thr-13 provides a ligand contact to ADP. ATP contacts are provided by Thr-13, Thr-14, and Ser-15. Thr-13 is a binding site for sn-glycerol 3-phosphate. Arg-17 lines the ADP pocket. Sn-glycerol 3-phosphate-binding residues include Arg-83, Glu-84, and Tyr-135. Residues Arg-83, Glu-84, and Tyr-135 each contribute to the glycerol site. His-231 carries the post-translational modification Phosphohistidine; by HPr. Asp-245 contacts sn-glycerol 3-phosphate. The glycerol site is built by Asp-245 and Gln-246. Thr-267 and Gly-310 together coordinate ADP. 4 residues coordinate ATP: Thr-267, Gly-310, Gln-314, and Gly-411. Residues Gly-411 and Asn-415 each coordinate ADP.

The protein belongs to the FGGY kinase family. In terms of assembly, homotetramer and homodimer (in equilibrium). In terms of processing, the phosphoenolpyruvate-dependent sugar phosphotransferase system (PTS), including enzyme I, and histidine-containing protein (HPr) are required for the phosphorylation, which leads to the activation of the enzyme.

It catalyses the reaction glycerol + ATP = sn-glycerol 3-phosphate + ADP + H(+). It participates in polyol metabolism; glycerol degradation via glycerol kinase pathway; sn-glycerol 3-phosphate from glycerol: step 1/1. Its activity is regulated as follows. Activated by phosphorylation and inhibited by fructose 1,6-bisphosphate (FBP). In terms of biological role, key enzyme in the regulation of glycerol uptake and metabolism. Catalyzes the phosphorylation of glycerol to yield sn-glycerol 3-phosphate. The polypeptide is Glycerol kinase (Halalkalibacterium halodurans (strain ATCC BAA-125 / DSM 18197 / FERM 7344 / JCM 9153 / C-125) (Bacillus halodurans)).